Here is a 393-residue protein sequence, read N- to C-terminus: S-adenosylmethionine synthase (393 aa).

Histidine 16 contacts ATP. Aspartate 18 provides a ligand contact to Mg(2+). Position 44 (glutamate 44) interacts with K(+). 2 residues coordinate L-methionine: glutamate 57 and glutamine 100. Positions 100-110 (QSNDIAQGVDH) are flexible loop. ATP contacts are provided by residues 167-169 (DAK), 238-239 (RF), aspartate 247, 253-254 (RK), alanine 270, and lysine 274. Aspartate 247 contacts L-methionine. Lysine 278 provides a ligand contact to L-methionine.

This sequence belongs to the AdoMet synthase family. In terms of assembly, homotetramer; dimer of dimers. The cofactor is Mg(2+). It depends on K(+) as a cofactor.

It localises to the cytoplasm. It carries out the reaction L-methionine + ATP + H2O = S-adenosyl-L-methionine + phosphate + diphosphate. It participates in amino-acid biosynthesis; S-adenosyl-L-methionine biosynthesis; S-adenosyl-L-methionine from L-methionine: step 1/1. Catalyzes the formation of S-adenosylmethionine (AdoMet) from methionine and ATP. The overall synthetic reaction is composed of two sequential steps, AdoMet formation and the subsequent tripolyphosphate hydrolysis which occurs prior to release of AdoMet from the enzyme. The protein is S-adenosylmethionine synthase of Paracidovorax citrulli (strain AAC00-1) (Acidovorax citrulli).